Reading from the N-terminus, the 141-residue chain is Large-conductance mechanosensitive channel (141 aa).

2 helical membrane passes run 16–36 (VIDLAVGVIIGAAFGKIVDSL) and 86–106 (GNFITVAVNFLILAFIVFLMV).

It belongs to the MscL family. As to quaternary structure, homopentamer.

The protein resides in the cell inner membrane. Channel that opens in response to stretch forces in the membrane lipid bilayer. May participate in the regulation of osmotic pressure changes within the cell. In Ralstonia nicotianae (strain ATCC BAA-1114 / GMI1000) (Ralstonia solanacearum), this protein is Large-conductance mechanosensitive channel.